Consider the following 237-residue polypeptide: Uridylate kinase (237 aa).

An ATP-binding site is contributed by 10-13 (KLSG). G51 lines the UMP pocket. ATP-binding residues include G52 and R56. Residues D71 and 132–139 (MGMPFFST) contribute to the UMP site. Positions 160, 166, and 169 each coordinate ATP.

It belongs to the UMP kinase family. Homohexamer.

It localises to the cytoplasm. It carries out the reaction UMP + ATP = UDP + ADP. Its pathway is pyrimidine metabolism; CTP biosynthesis via de novo pathway; UDP from UMP (UMPK route): step 1/1. With respect to regulation, inhibited by UTP. Functionally, catalyzes the reversible phosphorylation of UMP to UDP. The polypeptide is Uridylate kinase (Nocardioides sp. (strain ATCC BAA-499 / JS614)).